Reading from the N-terminus, the 155-residue chain is Small ribosomal subunit protein uS9 (155 aa).

This sequence belongs to the universal ribosomal protein uS9 family.

In Sinorhizobium medicae (strain WSM419) (Ensifer medicae), this protein is Small ribosomal subunit protein uS9.